The following is a 164-amino-acid chain: Ecotin (164 aa).

An N-terminal signal peptide occupies residues 1-20 (MKMFVPAVVFAALASASAWA). An intrachain disulfide couples Cys72 to Cys109.

The protein belongs to the protease inhibitor I11 (ecotin) family. Homodimer.

It localises to the periplasm. In terms of biological role, general inhibitor of pancreatic serine proteases: inhibits chymotrypsin, trypsin, elastases, factor X, kallikrein as well as a variety of other proteases. This chain is Ecotin, found in Salmonella paratyphi A (strain ATCC 9150 / SARB42).